Consider the following 154-residue polypeptide: Myoglobin (154 aa).

The region spanning 2–148 is the Globin domain; the sequence is GLSDGEWQLV…FRNDMAAKYK (147 aa). A Phosphoserine modification is found at Ser4. Residue His65 coordinates nitrite. His65 contributes to the O2 binding site. Thr68 carries the phosphothreonine modification. His94 is a binding site for heme b.

The protein belongs to the globin family. In terms of assembly, monomeric.

Its subcellular location is the cytoplasm. The protein localises to the sarcoplasm. It carries out the reaction Fe(III)-heme b-[protein] + nitric oxide + H2O = Fe(II)-heme b-[protein] + nitrite + 2 H(+). The enzyme catalyses H2O2 + AH2 = A + 2 H2O. Functionally, monomeric heme protein which primary function is to store oxygen and facilitate its diffusion within muscle tissues. Reversibly binds oxygen through a pentacoordinated heme iron and enables its timely and efficient release as needed during periods of heightened demand. Depending on the oxidative conditions of tissues and cells, and in addition to its ability to bind oxygen, it also has a nitrite reductase activity whereby it regulates the production of bioactive nitric oxide. Under stress conditions, like hypoxia and anoxia, it also protects cells against reactive oxygen species thanks to its pseudoperoxidase activity. The protein is Myoglobin (MB) of Ochotona princeps (Southern American pika).